A 272-amino-acid chain; its full sequence is Acetylglutamate kinase (272 aa).

Substrate contacts are provided by residues Gly-46–Ala-47, Arg-68, and Asn-166.

The protein belongs to the acetylglutamate kinase family. ArgB subfamily.

The protein localises to the cytoplasm. It carries out the reaction N-acetyl-L-glutamate + ATP = N-acetyl-L-glutamyl 5-phosphate + ADP. It participates in amino-acid biosynthesis; L-arginine biosynthesis; N(2)-acetyl-L-ornithine from L-glutamate: step 2/4. In terms of biological role, catalyzes the ATP-dependent phosphorylation of N-acetyl-L-glutamate. The polypeptide is Acetylglutamate kinase (Dehalococcoides mccartyi (strain CBDB1)).